Reading from the N-terminus, the 93-residue chain is Putative pterin-4-alpha-carbinolamine dehydratase (93 aa).

Belongs to the pterin-4-alpha-carbinolamine dehydratase family.

It catalyses the reaction (4aS,6R)-4a-hydroxy-L-erythro-5,6,7,8-tetrahydrobiopterin = (6R)-L-erythro-6,7-dihydrobiopterin + H2O. The polypeptide is Putative pterin-4-alpha-carbinolamine dehydratase (Synechococcus sp. (strain WH7803)).